Reading from the N-terminus, the 72-residue chain is Omega-conotoxin-like SVIA mutant 1 (72 aa).

Positions 1-22 are cleaved as a signal peptide; sequence MKLTCVVIVAVLLLTACQLITA. A propeptide spanning residues 23–48 is cleaved from the precursor; it reads EDSRGAQKHRTLRSTARRSKSELTTR. 3 disulfide bridges follow: Cys49–Cys63, Cys56–Cys66, and Cys62–Cys71. Pro55 is subject to 4-hydroxyproline.

This sequence belongs to the conotoxin O1 superfamily. In terms of tissue distribution, expressed by the venom duct.

It is found in the secreted. In terms of biological role, omega-conotoxins act at presynaptic membranes, they bind and block voltage-gated calcium channels (Cav). This is Omega-conotoxin-like SVIA mutant 1 from Conus striatus (Striated cone).